The chain runs to 227 residues: Atypical response regulator protein ChxR (227 aa).

Residues 6–108 (HVLLVSEHWD…ILKSAISLFL (103 aa)) form the Response regulatory domain. Residues 117–213 (PESIRFGPNV…LRGVGYLFSD (97 aa)) constitute a DNA-binding region (ompR/PhoB-type).

As to quaternary structure, homodimer.

May be a global positive regulator of transcription. Binds a cis-acting element of its own promoter DNA sequence and is hence probably also involved in its own transcription activation. The recognition sequence is 5'-WHGAWNH-N(3-5)-WHGAWNH-3', where W is A/T, H is C/A/T, N is G/C/A/T and the linker length in the middle is 3 to 5 nucleotides. In Chlamydia trachomatis serovar L2 (strain ATCC VR-902B / DSM 19102 / 434/Bu), this protein is Atypical response regulator protein ChxR.